A 68-amino-acid polypeptide reads, in one-letter code: Large ribosomal subunit protein uL29 (68 aa).

This sequence belongs to the universal ribosomal protein uL29 family.

The protein is Large ribosomal subunit protein uL29 (rpl29) of Archaeoglobus fulgidus (strain ATCC 49558 / DSM 4304 / JCM 9628 / NBRC 100126 / VC-16).